We begin with the raw amino-acid sequence, 622 residues long: Mitochondrial distribution and morphology protein 34 (622 aa).

Residues 1 to 204 (MSFKVNWNSL…LPTLIHQLSL (204 aa)) form the SMP-LTD domain. Disordered regions lie at residues 364–393 (YSNK…DNTV), 442–468 (LETM…RAYQ), and 572–592 (LDGG…NFRP). Residues 372 to 385 (KPKRRRIKVHKKSK) are compositionally biased toward basic residues. Over residues 446 to 455 (STGSSSSASS) the composition is skewed to low complexity. A compositionally biased stretch (polar residues) spans 577–587 (NSANTNNSSGG).

Belongs to the MDM34 family. Component of the ER-mitochondria encounter structure (ERMES) or MDM complex, composed of MMM1, MDM10, MDM12 and MDM34.

The protein localises to the mitochondrion outer membrane. Functionally, component of the ERMES/MDM complex, which serves as a molecular tether to connect the endoplasmic reticulum (ER) and mitochondria. Components of this complex are involved in the control of mitochondrial shape and protein biogenesis, and function in nonvesicular lipid trafficking between the ER and mitochondria. MDM34 is required for the interaction of the ER-resident membrane protein MMM1 and the outer mitochondrial membrane-resident beta-barrel protein MDM10. The protein is Mitochondrial distribution and morphology protein 34 of Candida albicans (strain WO-1) (Yeast).